Reading from the N-terminus, the 470-residue chain is mRNA export factor ICP27 homolog (470 aa).

2 disordered regions span residues 1–31 and 73–202; these read MALS…TGGD and FSAS…AGDR. The segment covering 73–85 has biased composition (polar residues); it reads FSASPQRAQPSNP. Basic residues-rich tracts occupy residues 94–107 and 178–187; these read HGRR…RRNN and RVHRNRRRGN. Zn(2+) is bound by residues C359, H437, C441, and C446. Residues 359-446 form a CHC2-type zinc finger; the sequence is CYLSSSGSPT…HKRRCKADTC (88 aa).

Belongs to the HHV-1 ICP27 protein family. Homodimer. Homodimerization is required for transactivation. Associates in a complex with RNA, and host export factors NXF1/TAP and ALYREF; these interactions allow nuclear export of viral transcripts. Interacts with three host shuttling SR proteins SRSF1, SRSF3 and SRSF7. Interacts with host SRPK1. Interacts with IE62; this interaction enhances IE62 transactivation.

The protein resides in the host cytoplasm. It localises to the host nucleus. Multifunctional regulator of the expression of viral genes that mediates nuclear export of viral intronless mRNAs. This immediate early (EI) protein promotes the nuclear export of viral intronless mRNAs by interacting with mRNAs and host NXF1/TAP. This Equine herpesvirus 1 (strain Kentucky A) (EHV-1) protein is mRNA export factor ICP27 homolog.